Here is an 81-residue protein sequence, read N- to C-terminus: Large ribosomal subunit protein bL31B (81 aa).

This sequence belongs to the bacterial ribosomal protein bL31 family. Type B subfamily. As to quaternary structure, part of the 50S ribosomal subunit.

This Limosilactobacillus fermentum (strain NBRC 3956 / LMG 18251) (Lactobacillus fermentum) protein is Large ribosomal subunit protein bL31B.